A 137-amino-acid polypeptide reads, in one-letter code: Small ribosomal subunit protein uS9 (137 aa).

A disordered region spans residues 118–137; it reads KERKKYGLRKARKAPQYSKR.

It belongs to the universal ribosomal protein uS9 family.

The polypeptide is Small ribosomal subunit protein uS9 (Acaryochloris marina (strain MBIC 11017)).